Reading from the N-terminus, the 321-residue chain is Aspartate carbamoyltransferase catalytic subunit (321 aa).

Carbamoyl phosphate-binding residues include Arg65 and Thr66. Lys93 contacts L-aspartate. Positions 115, 143, and 146 each coordinate carbamoyl phosphate. The L-aspartate site is built by Arg176 and Arg230. 2 residues coordinate carbamoyl phosphate: Gly271 and Pro272.

The protein belongs to the aspartate/ornithine carbamoyltransferase superfamily. ATCase family. Heterododecamer (2C3:3R2) of six catalytic PyrB chains organized as two trimers (C3), and six regulatory PyrI chains organized as three dimers (R2).

It carries out the reaction carbamoyl phosphate + L-aspartate = N-carbamoyl-L-aspartate + phosphate + H(+). It participates in pyrimidine metabolism; UMP biosynthesis via de novo pathway; (S)-dihydroorotate from bicarbonate: step 2/3. Functionally, catalyzes the condensation of carbamoyl phosphate and aspartate to form carbamoyl aspartate and inorganic phosphate, the committed step in the de novo pyrimidine nucleotide biosynthesis pathway. The sequence is that of Aspartate carbamoyltransferase catalytic subunit from Bartonella bacilliformis (strain ATCC 35685 / KC583 / Herrer 020/F12,63).